The sequence spans 203 residues: dTTP/UTP pyrophosphatase (203 aa).

Residue Asp70 is the Proton acceptor of the active site.

Belongs to the Maf family. YhdE subfamily. Requires a divalent metal cation as cofactor.

The protein resides in the cytoplasm. The catalysed reaction is dTTP + H2O = dTMP + diphosphate + H(+). The enzyme catalyses UTP + H2O = UMP + diphosphate + H(+). In terms of biological role, nucleoside triphosphate pyrophosphatase that hydrolyzes dTTP and UTP. May have a dual role in cell division arrest and in preventing the incorporation of modified nucleotides into cellular nucleic acids. In Pseudomonas putida (strain ATCC 47054 / DSM 6125 / CFBP 8728 / NCIMB 11950 / KT2440), this protein is dTTP/UTP pyrophosphatase (maf-1).